The sequence spans 22 residues: leu leader peptide (22 aa).

The disordered stretch occupies residues 1–22; the sequence is MLHHMTSRANLLLLRRGGSQRS. Over residues 11–22 the composition is skewed to low complexity; that stretch reads LLLLRRGGSQRS.

In terms of biological role, involved in control of the biosynthesis of leucine. The polypeptide is leu leader peptide (leuL) (Corynebacterium glutamicum (strain ATCC 13032 / DSM 20300 / JCM 1318 / BCRC 11384 / CCUG 27702 / LMG 3730 / NBRC 12168 / NCIMB 10025 / NRRL B-2784 / 534)).